Reading from the N-terminus, the 388-residue chain is Ribonucleoside-diphosphate reductase subunit beta (388 aa).

Fe cation is bound by residues Asp84, Glu115, and His118. Tyr122 is a catalytic residue. 3 residues coordinate Fe cation: Glu212, Glu247, and His250.

This sequence belongs to the ribonucleoside diphosphate reductase small chain family. In terms of assembly, heterodimer of a large and a small subunit. The cofactor is Fe cation.

It carries out the reaction a 2'-deoxyribonucleoside 5'-diphosphate + [thioredoxin]-disulfide + H2O = a ribonucleoside 5'-diphosphate + [thioredoxin]-dithiol. In terms of biological role, provides the precursors necessary for DNA synthesis. Catalyzes the biosynthesis of deoxyribonucleotides from the corresponding ribonucleotides. In Escherichia coli (Bacteriophage T4), this protein is Ribonucleoside-diphosphate reductase subunit beta (NRDB).